We begin with the raw amino-acid sequence, 693 residues long: Polyribonucleotide nucleotidyltransferase (693 aa).

Residues Asp489 and Asp495 each contribute to the Mg(2+) site. Positions 556–615 constitute a KH domain; that stretch reads PQIHVMNINPAKIKDVVGRGGATVKGIVEKTGAQIDTSDSGEVKVFAKDKKSMDMAVAMI. The S1 motif domain occupies 625 to 693; that stretch reads GQVYKGKIVK…GRVKLSLVAR (69 aa).

The protein belongs to the polyribonucleotide nucleotidyltransferase family. In terms of assembly, component of the RNA degradosome, which is a multiprotein complex involved in RNA processing and mRNA degradation. It depends on Mg(2+) as a cofactor.

Its subcellular location is the cytoplasm. The enzyme catalyses RNA(n+1) + phosphate = RNA(n) + a ribonucleoside 5'-diphosphate. Its function is as follows. Involved in mRNA degradation. Catalyzes the phosphorolysis of single-stranded polyribonucleotides processively in the 3'- to 5'-direction. The protein is Polyribonucleotide nucleotidyltransferase of Francisella tularensis subsp. mediasiatica (strain FSC147).